The following is a 250-amino-acid chain: DNA repair protein RecO (250 aa).

Belongs to the RecO family.

Involved in DNA repair and RecF pathway recombination. The chain is DNA repair protein RecO from Granulibacter bethesdensis (strain ATCC BAA-1260 / CGDNIH1).